The chain runs to 222 residues: uncharacterized protein (222 aa).

This is an uncharacterized protein from Klebsiella pneumoniae.